Here is a 131-residue protein sequence, read N- to C-terminus: Tegument protein ORF52 (131 aa).

The tract at residues 103-131 (SDGGTAKPPPGANNRRRRGASTTRAGVDD) is disordered. The span at 122–131 (ASTTRAGVDD) shows a compositional bias: low complexity. Ser-123 carries the post-translational modification Phosphoserine; by host.

This sequence belongs to the herpesviridae BLRF2 family. As to quaternary structure, homooligomer; homooligomerizes and binds double-stranded DNA (dsDNA) cooperatively. Interacts with host CGAS. Interacts with PQBP1.

It localises to the host cytoplasm. The protein resides in the virion tegument. In terms of biological role, plays a role in the inhibition of host innate immune system by targeting the CGAS enzymatic activity which is the principal cytosolic DNA sensor that detects invading viral DNA. Acts by inhibiting CGAS-DNA phase separation: directly binds double-stranded DNA (dsDNA) in a length dependent but sequence independent manner and is able to form DNA-induced phase separation in infected cells. DNA phase separation of ORF52 mediates disruption of liquid-like droplets in which CGAS is activated, thereby preventing CGAS activity. Targets also the HDP-RNP complex composed of DNA-PK subunits and paraspeckle proteins. This complex is a key nuclear regulator of DNA-mediated activation of innate immune response through the cGAS-STING pathway. This is Tegument protein ORF52 from Homo sapiens (Human).